The chain runs to 138 residues: Thyrotropin subunit beta (138 aa).

The N-terminal stretch at 1-20 (MTATFLMSLLFGLAFGQTMS) is a signal peptide. Cystine bridges form between Cys-22–Cys-72, Cys-36–Cys-87, Cys-39–Cys-125, Cys-47–Cys-103, Cys-51–Cys-105, and Cys-108–Cys-115. Asn-43 is a glycosylation site (N-linked (GlcNAc...) asparagine). Positions 133 to 138 (LVGFPV) are excised as a propeptide.

This sequence belongs to the glycoprotein hormones subunit beta family. Heterodimer of a common alpha chain and a unique beta chain which confers biological specificity to thyrotropin, lutropin, follitropin and gonadotropin.

It localises to the secreted. Functionally, indispensable for the control of thyroid structure and metabolism. The polypeptide is Thyrotropin subunit beta (TSHB) (Monodelphis domestica (Gray short-tailed opossum)).